Consider the following 351-residue polypeptide: NAD-dependent protein deacetylase SIR2rp1 (351 aa).

Positions 10-325 (HVVGEPTFEG…RSFAQALGFG (316 aa)) constitute a Deacetylase sirtuin-type domain. NAD(+)-binding positions include 37 to 57 (GAGI…TGLY) and 122 to 125 (QNID). Catalysis depends on His-142, which acts as the Proton acceptor. 4 residues coordinate Zn(2+): Cys-150, Cys-153, Cys-174, and Cys-177. NAD(+)-binding positions include 213 to 215 (GTS) and 238 to 240 (NLE). A disordered region spans residues 260 to 284 (SSYRLSTGNGNGSKISSGDSSNSSS). Over residues 265 to 284 (STGNGNGSKISSGDSSNSSS) the composition is skewed to low complexity. Cys-311 provides a ligand contact to NAD(+).

Belongs to the sirtuin family. Class I subfamily. The cofactor is Zn(2+).

It is found in the nucleus. The protein resides in the chromosome. It localises to the telomere. It carries out the reaction N(6)-acetyl-L-lysyl-[protein] + NAD(+) + H2O = 2''-O-acetyl-ADP-D-ribose + nicotinamide + L-lysyl-[protein]. NAD-dependent protein deacetylase, which is involved in repression of RNA polymerase I-mediated expression immediately adjacent to telomeres. It is however not involved in antigenic variation and subtelomeric variant surface glycoprotein (VSG) gene silencing. Plays a role in DNA damage response. Also has ADP-ribosylation activity in vitro. This is NAD-dependent protein deacetylase SIR2rp1 (SIR2rp1) from Trypanosoma brucei brucei (strain 927/4 GUTat10.1).